Here is a 37-residue protein sequence, read N- to C-terminus: U1-ectatotoxin-Eb1a subunit B (37 aa).

Belongs to the ectatomin family. Ectatomin-Eq subfamily. Heterodimer of subunits A and B; disulfide-linked. Expressed by the venom gland.

The protein localises to the secreted. It localises to the target cell membrane. This Ectatomma brunneum (Ant) protein is U1-ectatotoxin-Eb1a subunit B.